The sequence spans 130 residues: MELWRQLNQAGLVPPGLGPPPQALREVSPVEIPGQTLRTAGADTGGACDSLLWIREELGNLRRVDVQLLGQLCSLGLEMGALREELVTILEEEEESSKEEEEDQEPQRKQEEEHLEACPAPHPPDFEMMI.

Over residues 91-104 (EEEEESSKEEEEDQ) the composition is skewed to acidic residues. Residues 91 to 130 (EEEEESSKEEEEDQEPQRKQEEEHLEACPAPHPPDFEMMI) are disordered. The span at 105-116 (EPQRKQEEEHLE) shows a compositional bias: basic and acidic residues.

The chain is Glutamate-rich protein 4 (ERICH4) from Homo sapiens (Human).